The following is a 440-amino-acid chain: Tubby-like F-box protein 13 (440 aa).

Positions 51–106 constitute an F-box domain; sequence SCWASLPPELLRDIIERLEESEATWPSRKHVVACAGVCRTWREMCKEIVKNPELCG.

Belongs to the TUB family. As to expression, ubiquitous.

This Oryza sativa subsp. japonica (Rice) protein is Tubby-like F-box protein 13 (TULP13).